Here is a 238-residue protein sequence, read N- to C-terminus: tRNA (guanine-N(1)-)-methyltransferase (238 aa).

Residues Gly110 and 129 to 134 (LGDFIL) contribute to the S-adenosyl-L-methionine site.

The protein belongs to the RNA methyltransferase TrmD family. In terms of assembly, homodimer.

The protein localises to the cytoplasm. The catalysed reaction is guanosine(37) in tRNA + S-adenosyl-L-methionine = N(1)-methylguanosine(37) in tRNA + S-adenosyl-L-homocysteine + H(+). Functionally, specifically methylates guanosine-37 in various tRNAs. This is tRNA (guanine-N(1)-)-methyltransferase from Clostridium botulinum (strain Eklund 17B / Type B).